The sequence spans 173 residues: Translocon-associated protein subunit delta (173 aa).

An N-terminal signal peptide occupies residues 1-23 (MAAMASLGALALLLLSSLSRCSA). The Lumenal portion of the chain corresponds to 24–144 (EACLEPQITP…SVDHRGTWNG (121 aa)). C26 and C57 are joined by a disulfide. K73 is covalently cross-linked (Glycyl lysine isopeptide (Lys-Gly) (interchain with G-Cter in ubiquitin)). A helical transmembrane segment spans residues 145 to 165 (PWVSTEVLAAAIGLVIYYLAF). Residues 166–173 (SAKSHIQA) lie on the Cytoplasmic side of the membrane.

Belongs to the TRAP-delta family. As to quaternary structure, heterotetramer of TRAP-alpha, TRAP-beta, TRAP-delta and TRAP-gamma.

The protein localises to the endoplasmic reticulum membrane. TRAP proteins are part of a complex whose function is to bind calcium to the ER membrane and thereby regulate the retention of ER resident proteins. The sequence is that of Translocon-associated protein subunit delta (SSR4) from Homo sapiens (Human).